A 340-amino-acid polypeptide reads, in one-letter code: DNA-directed RNA polymerase subunit alpha (340 aa).

Positions 1–226 (MLIAQRPSLT…ELFGLARELN (226 aa)) are alpha N-terminal domain (alpha-NTD). The alpha C-terminal domain (alpha-CTD) stretch occupies residues 243 to 340 (LAADLALPIE…DAGFVETEQY (98 aa)).

It belongs to the RNA polymerase alpha chain family. As to quaternary structure, homodimer. The RNAP catalytic core consists of 2 alpha, 1 beta, 1 beta' and 1 omega subunit. When a sigma factor is associated with the core the holoenzyme is formed, which can initiate transcription.

It carries out the reaction RNA(n) + a ribonucleoside 5'-triphosphate = RNA(n+1) + diphosphate. DNA-dependent RNA polymerase catalyzes the transcription of DNA into RNA using the four ribonucleoside triphosphates as substrates. The polypeptide is DNA-directed RNA polymerase subunit alpha (Streptomyces avermitilis (strain ATCC 31267 / DSM 46492 / JCM 5070 / NBRC 14893 / NCIMB 12804 / NRRL 8165 / MA-4680)).